The chain runs to 21 residues: Complement receptor 3-related protein (21 aa).

The protein localises to the secreted. Plays a role in adherence of C.albicans to buccal epithelial cells, and in biofilm formation. The polypeptide is Complement receptor 3-related protein (Candida albicans (Yeast)).